Here is a 323-residue protein sequence, read N- to C-terminus: Acetyl esterase (323 aa).

The Involved in the stabilization of the negatively charged intermediate by the formation of the oxyanion hole signature appears at 91 to 93; the sequence is HGG. Residues S165, D262, and H292 contribute to the active site.

The protein belongs to the 'GDXG' lipolytic enzyme family. As to quaternary structure, homodimer. Interacts with MalT and MelA.

It is found in the cytoplasm. Displays esterase activity towards short chain fatty esters (acyl chain length of up to 8 carbons). Able to hydrolyze triacetylglycerol (triacetin) and tributyrylglycerol (tributyrin), but not trioleylglycerol (triolein) or cholesterol oleate. Negatively regulates MalT activity by antagonizing maltotriose binding. Inhibits MelA galactosidase activity. This is Acetyl esterase from Salmonella paratyphi B (strain ATCC BAA-1250 / SPB7).